The sequence spans 370 residues: Adaptive-response sensory kinase SasA (370 aa).

The Histidine kinase domain maps to 152–365 (MVAHELRTPL…CFYLTVPVWQ (214 aa)). His155 carries the phosphohistidine; by autocatalysis modification.

In terms of assembly, homooligomerizes. Interacts with KaiC. Participates in the KaiBC complex, whose core is composed of a KaiC homohexamer and 6 KaiB.

It catalyses the reaction ATP + protein L-histidine = ADP + protein N-phospho-L-histidine.. In terms of biological role, member of the two-component regulatory system SasA/RpaA involved in genome-wide circadian gene expression. One of several clock output pathways. Participates in the Kai clock protein complex, the main circadian regulator in cyanobacteria, via its interaction with KaiC. KaiC enhances the autophosphorylation activity of SasA, which then transfers its phosphate group to RpaA to activate it. In addition to its output function, recruits fold-shifted KaiB (KaiB(fs)) to KaiC to cooperatively form the KaiB(6):KaiC(6) complex (independent of SasA kinase activity). Required for robustness of the circadian rhythm of gene expression and is involved in clock output, also required for adaptation to light/dark cycles. The chain is Adaptive-response sensory kinase SasA from Prochlorococcus marinus (strain MIT 9313).